The chain runs to 394 residues: Transcriptional regulator Myc-1 (394 aa).

Residue Thr-58 is glycosylated (O-linked (GlcNAc) threonine). The 9aaTAD signature appears at 76 to 84 (EMVSEFLGD). Disordered stretches follow at residues 177–247 (SGKS…SRYP) and 283–318 (EASSNSNSRHVKQRKCTSPRTSDSEDNDKRRTHNVL). A compositionally biased stretch (acidic residues) spans 205-226 (DSEEEEEEEEEEEEEEEEEEID). The span at 229 to 238 (TVEKRQKKNE) shows a compositional bias: basic and acidic residues. A bHLH domain is found at 310 to 362 (DKRRTHNVLERQRRNELKLSFFALRDEIPDVANNEKAAKVVILKKATECIHSM). The tract at residues 369–390 (LLSIKEQLRRKSEQLKHRLQLL) is leucine-zipper.

Efficient DNA binding requires dimerization with another bHLH protein. Binds DNA as a heterodimer with MAX.

The protein resides in the nucleus. In terms of biological role, transcription factor that binds DNA in a non-specific manner, yet also specifically recognizes the core sequence 5'-CAC[GA]TG-3'. Activates the transcription of growth-related genes. This chain is Transcriptional regulator Myc-1 (myca), found in Cyprinus carpio (Common carp).